The following is a 1011-amino-acid chain: PE-PGRS family protein PE_PGRS30 (1011 aa).

The PE domain maps to M1–A93. The tract at residues S130 to L696 is PGRS domain. Residues G595–L696 are compositionally biased toward gly residues. The segment at G595 to G701 is disordered. The C-terminal domain stretch occupies residues F697–P1011.

It belongs to the mycobacterial PE family. PGRS subfamily.

It localises to the secreted. It is found in the cell wall. The protein localises to the cell surface. Mediates suppression of pro-inflammatory immune response in macrophages via modulation of host cytokine response. Required for full virulence. Involved in inhibition of phago-lysosome fusion. This Mycobacterium tuberculosis (strain ATCC 25618 / H37Rv) protein is PE-PGRS family protein PE_PGRS30.